A 365-amino-acid chain; its full sequence is Elongation factor Tu (365 aa).

GTP-binding positions include 1-7 (HVDHGKT), 62-66 (DCPGH), and 117-120 (NKCD). The tr-type G domain maps to 1–185 (HVDHGKTTLT…TLDSYIPTPE (185 aa)). Position 7 (threonine 7) interacts with Mg(2+).

It belongs to the TRAFAC class translation factor GTPase superfamily. Classic translation factor GTPase family. EF-Tu/EF-1A subfamily. Monomer.

It is found in the cytoplasm. It catalyses the reaction GTP + H2O = GDP + phosphate + H(+). In terms of biological role, GTP hydrolase that promotes the GTP-dependent binding of aminoacyl-tRNA to the A-site of ribosomes during protein biosynthesis. The sequence is that of Elongation factor Tu from Buchnera aphidicola subsp. Schlechtendalia chinensis.